We begin with the raw amino-acid sequence, 651 residues long: Histone-lysine N-methyltransferase family member SUVH2 (651 aa).

Residues 1–28 (MSTLLPFPDLNLMPDSQSSTAGTTAGDT) form a disordered region. Residues 15–28 (DSQSSTAGTTAGDT) show a composition bias toward low complexity. The region spanning 202 to 358 (DKHIVGPVTG…KFRLVRIEGQ (157 aa)) is the YDG domain. In terms of domain architecture, Pre-SET spans 434–492 (TGCECKLSCTDDCLCARKNGGEFAYDDNGHLLKGKHVVFECGEFCTCGPSCKSRVTQKG). Zn(2+) is bound by residues C436, C438, C442, C446, C448, C474, C478, C480, and C484. Residues 495 to 638 (NRLEVFRSKE…PLAELSLDYG (144 aa)) enclose the SET domain.

Belongs to the class V-like SAM-binding methyltransferase superfamily. Histone-lysine methyltransferase family. Suvar3-9 subfamily. Self-interacts. Interacts with DNA-directed RNA polymerase V subunit NRPE1 and with DRD1 and DMS3. Binds to MORC1/CRT1. In terms of tissue distribution, expressed at low levels in leaves stems and flowers.

Its subcellular location is the nucleus. The protein resides in the chromosome. The protein localises to the centromere. Its function is as follows. Histone methyltransferase family member that plays a central role in gene silencing. Together with MORC6 and SUVH9, regulates the silencing of some transposable elements (TEs). According to PubMed:15775980, it is required for normal methylation of 'Lys-9' and 'Lys-27' of histone H3, 'Lys-20' of H4, and cytosine, but PubMed:19043555 see no significant effect on histone methylation when the gene is mutated. According to PubMed:19043555, the protein does not bind S-adenosyl-L-methionine and lacks methyltransferase activity. Instead, it may function downstream of DRM2 in RNA-directed DNA methylation, binding to methylated DNA and recruiting DNA-directed RNA polymerase V to chromatin. The polypeptide is Histone-lysine N-methyltransferase family member SUVH2 (SUVH2) (Arabidopsis thaliana (Mouse-ear cress)).